Consider the following 132-residue polypeptide: Small ribosomal subunit protein uS8 (132 aa).

This sequence belongs to the universal ribosomal protein uS8 family. Part of the 30S ribosomal subunit. Contacts proteins S5 and S12.

In terms of biological role, one of the primary rRNA binding proteins, it binds directly to 16S rRNA central domain where it helps coordinate assembly of the platform of the 30S subunit. This is Small ribosomal subunit protein uS8 from Streptomyces coelicolor (strain ATCC BAA-471 / A3(2) / M145).